Here is a 442-residue protein sequence, read N- to C-terminus: Cell division protein FtsZ (442 aa).

GTP-binding positions include 18 to 22 (GGGVN), 105 to 107 (GTG), E136, R140, and D184. Residues 329–341 (AAPAAEPVQQQVP) show a composition bias toward low complexity. The tract at residues 329–442 (AAPAAEPVQQ…DDLDVPSFLQ (114 aa)) is disordered. Basic and acidic residues-rich tracts occupy residues 349 to 362 (PEKE…REEN) and 390 to 431 (NDRD…RDDR).

Belongs to the FtsZ family. As to quaternary structure, homodimer. Polymerizes to form a dynamic ring structure in a strictly GTP-dependent manner. Interacts directly with several other division proteins.

It localises to the cytoplasm. Functionally, essential cell division protein that forms a contractile ring structure (Z ring) at the future cell division site. The regulation of the ring assembly controls the timing and the location of cell division. One of the functions of the FtsZ ring is to recruit other cell division proteins to the septum to produce a new cell wall between the dividing cells. Binds GTP and shows GTPase activity. This Corynebacterium glutamicum (strain ATCC 13032 / DSM 20300 / JCM 1318 / BCRC 11384 / CCUG 27702 / LMG 3730 / NBRC 12168 / NCIMB 10025 / NRRL B-2784 / 534) protein is Cell division protein FtsZ.